The primary structure comprises 571 residues: MKIFVASAWPYVNAVPHLGNLIGSVLSADVFARYARLKYGQENVVFVSGSDEHGTPIEVEAKKRNVNPKELTDQAHEYDKKLFLDVWEISYNNYTRTESEIHKTFVRDFMLKLEKYIKIEEDEIPYCEYDKIYLPDRFVKGTCPYCGFEDARGDQCDNCGRLLTPRLLVNPKCVLCGRTPVFKKTKHWFFDLSAFNDKIEEWIKNSQTLPENVKSVALSWVKEGLKPRSITRDNAWGIPAPFEGAEGKTIYVWFEALLGYISATIEYFKKIGKEEEWKKFWFGNDVKSYYFIGKDNIPFHAVILPAMLMASGENYVLPTVIAATEYLLYEGQKFSKSRKIGVWIDEAPQLLDIEYWRFILIRLRPEERDTNFTWREALRIVNTELNDDIGNYANRVLSMVRRYFNGEVPQIKYEKLKDEDTKFISEIKEAPKKMSELFELGKLKAGSEEILKLARNGNSYLNIRAPWNLIKNDKEEAGNVLNIAVNSLRTLSIMLYPLMPKSAEKLYNMLGFKDIEREKWDLAGELVIKSNHKINEVSVLFKKVELNENDINKKLDEIRKNLEKIRPTLLR.

Positions 10-20 (PYVNAVPHLGN) match the 'HIGH' region motif. Cysteine 143, cysteine 146, cysteine 156, and cysteine 159 together coordinate Zn(2+). The short motif at 333 to 337 (KFSKS) is the 'KMSKS' region element. Residue lysine 336 coordinates ATP.

It belongs to the class-I aminoacyl-tRNA synthetase family. MetG type 1 subfamily. It depends on Zn(2+) as a cofactor.

The protein localises to the cytoplasm. It carries out the reaction tRNA(Met) + L-methionine + ATP = L-methionyl-tRNA(Met) + AMP + diphosphate. Its function is as follows. Is required not only for elongation of protein synthesis but also for the initiation of all mRNA translation through initiator tRNA(fMet) aminoacylation. The chain is Methionine--tRNA ligase from Sulfurisphaera tokodaii (strain DSM 16993 / JCM 10545 / NBRC 100140 / 7) (Sulfolobus tokodaii).